Reading from the N-terminus, the 452-residue chain is 23S rRNA (uracil(1939)-C(5))-methyltransferase RlmD (452 aa).

The tract at residues 1–25 (MSKKKSNSGLRFQPAGGNRTPQVPV) is disordered. The 59-residue stretch at 22-80 (QVPVGKKQRLDIERLAGDGRGIAFLDGRTWFVSGALAGEAVEARVLNARGKVVEARLER) folds into the TRAM domain. [4Fe-4S] cluster-binding residues include cysteine 93, cysteine 99, cysteine 102, and cysteine 181. Glutamine 285, phenylalanine 314, asparagine 319, glutamate 335, aspartate 362, and aspartate 383 together coordinate S-adenosyl-L-methionine. Catalysis depends on cysteine 409, which acts as the Nucleophile.

Belongs to the class I-like SAM-binding methyltransferase superfamily. RNA M5U methyltransferase family. RlmD subfamily.

The enzyme catalyses uridine(1939) in 23S rRNA + S-adenosyl-L-methionine = 5-methyluridine(1939) in 23S rRNA + S-adenosyl-L-homocysteine + H(+). Functionally, catalyzes the formation of 5-methyl-uridine at position 1939 (m5U1939) in 23S rRNA. In Pseudomonas putida (strain ATCC 47054 / DSM 6125 / CFBP 8728 / NCIMB 11950 / KT2440), this protein is 23S rRNA (uracil(1939)-C(5))-methyltransferase RlmD.